A 279-amino-acid polypeptide reads, in one-letter code: Thymidylate synthase (279 aa).

Residue 141–142 (RR) coordinates dUMP. The Nucleophile role is filled by Cys-161. DUMP-binding positions include 181–184 (RSND), Asn-192, and 222–224 (HVY). Asp-184 contributes to the (6R)-5,10-methylene-5,6,7,8-tetrahydrofolate binding site. Residue Ala-278 participates in (6R)-5,10-methylene-5,6,7,8-tetrahydrofolate binding.

This sequence belongs to the thymidylate synthase family. Bacterial-type ThyA subfamily. As to quaternary structure, homodimer.

It is found in the cytoplasm. It carries out the reaction dUMP + (6R)-5,10-methylene-5,6,7,8-tetrahydrofolate = 7,8-dihydrofolate + dTMP. It functions in the pathway pyrimidine metabolism; dTTP biosynthesis. Catalyzes the reductive methylation of 2'-deoxyuridine-5'-monophosphate (dUMP) to 2'-deoxythymidine-5'-monophosphate (dTMP) while utilizing 5,10-methylenetetrahydrofolate (mTHF) as the methyl donor and reductant in the reaction, yielding dihydrofolate (DHF) as a by-product. This enzymatic reaction provides an intracellular de novo source of dTMP, an essential precursor for DNA biosynthesis. This is Thymidylate synthase from Bacillus mojavensis.